The primary structure comprises 157 residues: MSGIALSRLAQERKAWRKDHPFGFVAVPTKNPDGTMNLMNWECAIPGKKGTPWEGGLFKLRMLFKDDYPSSPPKCKFEPPLFHPNVYPSGTVCLSILEEDKDWRPAITIKQILLGIQELLNEPNIQDPAQAEAYTIYCQNRVEYEKRVRAQAKKFSP.

The region spanning Ile4 to Pro157 is the UBC core domain. Positions Arg13 to Lys18 are interaction with SUMO1. Cys93 (glycyl thioester intermediate) is an active-site residue.

Belongs to the ubiquitin-conjugating enzyme family. In terms of assembly, forms a tight complex with rangap1 and ranbp2. Interacts with vsx1.

The protein resides in the nucleus. The protein operates within protein modification; protein sumoylation. Its function is as follows. Accepts the ubiquitin-like proteins sumo1, sumo2 and sumo3 from the uble1a-uble1b E1 complex and catalyzes their covalent attachment to other proteins with the help of an E3 ligase such as ranbp2 or cbx4. Essential for nuclear architecture and chromosome segregation. Mediates nuclear localization of vsx1. Required for progression through mitosis during organogenesis. The chain is SUMO-conjugating enzyme UBC9-B (ube2ib) from Danio rerio (Zebrafish).